The primary structure comprises 415 residues: Phosphoglycerate kinase (415 aa).

Val-23, Asp-24, Phe-25, Asn-26, Gln-39, Arg-40, Ser-63, His-64, Gly-66, Arg-67, Leu-122, Arg-123, and Arg-170 together coordinate (2R)-3-phosphoglycerate. Residue Gly-213 participates in ADP binding. Gly-213 is a CDP binding site. Ala-214 and Lys-215 together coordinate AMP. Ala-214 contributes to the ATP binding site. Position 214 (Ala-214) interacts with Mg(2+). A CDP-binding site is contributed by Asp-218. Residue Asp-218 participates in Mg(2+) binding. AMP is bound at residue Lys-219. Lys-219 lines the ATP pocket. Gly-237 serves as a coordination point for ADP. Residue Gly-237 participates in CDP binding. Residues Gly-238 and Gly-311 each contribute to the AMP site. Positions 238 and 311 each coordinate ATP. Positions 336 and 341 each coordinate CDP. Phe-341 provides a ligand contact to ADP. Glu-342 lines the AMP pocket. Glu-342, Asp-373, and Thr-374 together coordinate ATP. Position 373 (Asp-373) interacts with Mg(2+).

It belongs to the phosphoglycerate kinase family. Monomer. Mg(2+) is required as a cofactor.

It is found in the cytoplasm. The protein localises to the mitochondrion. The catalysed reaction is (2R)-3-phosphoglycerate + ATP = (2R)-3-phospho-glyceroyl phosphate + ADP. The protein operates within carbohydrate degradation; glycolysis; pyruvate from D-glyceraldehyde 3-phosphate: step 2/5. Functionally, catalyzes one of the two ATP producing reactions in the glycolytic pathway via the reversible conversion of 1,3-diphosphoglycerate to 3-phosphoglycerate. Both L- and D- forms of purine and pyrimidine nucleotides can be used as substrates, but the activity is much lower on pyrimidines. Negatively regulates the biosynthesis of acetyl-CoA from pyruvate in the mitochondrion. This chain is Phosphoglycerate kinase (PGKA), found in Penicillium chrysogenum (Penicillium notatum).